The primary structure comprises 671 residues: DNA ligase (671 aa).

NAD(+) is bound by residues 34–38 (DAEYD), 83–84 (SL), and Glu-117. Catalysis depends on Lys-119, which acts as the N6-AMP-lysine intermediate. Residues Arg-140, Glu-177, Lys-293, and Lys-317 each coordinate NAD(+). Positions 411, 414, 429, and 434 each coordinate Zn(2+). The BRCT domain occupies 591 to 671 (KVGGKFTGKT…EFLQMLEGEQ (81 aa)).

This sequence belongs to the NAD-dependent DNA ligase family. LigA subfamily. The cofactor is Mg(2+). It depends on Mn(2+) as a cofactor.

The catalysed reaction is NAD(+) + (deoxyribonucleotide)n-3'-hydroxyl + 5'-phospho-(deoxyribonucleotide)m = (deoxyribonucleotide)n+m + AMP + beta-nicotinamide D-nucleotide.. In terms of biological role, DNA ligase that catalyzes the formation of phosphodiester linkages between 5'-phosphoryl and 3'-hydroxyl groups in double-stranded DNA using NAD as a coenzyme and as the energy source for the reaction. It is essential for DNA replication and repair of damaged DNA. The sequence is that of DNA ligase from Geobacter metallireducens (strain ATCC 53774 / DSM 7210 / GS-15).